Consider the following 196-residue polypeptide: Ribosomal RNA large subunit methyltransferase E (196 aa).

Residues glycine 50, tryptophan 52, aspartate 70, aspartate 87, and aspartate 112 each coordinate S-adenosyl-L-methionine. Catalysis depends on lysine 152, which acts as the Proton acceptor.

It belongs to the class I-like SAM-binding methyltransferase superfamily. RNA methyltransferase RlmE family.

It is found in the cytoplasm. The enzyme catalyses uridine(2552) in 23S rRNA + S-adenosyl-L-methionine = 2'-O-methyluridine(2552) in 23S rRNA + S-adenosyl-L-homocysteine + H(+). Its function is as follows. Specifically methylates the uridine in position 2552 of 23S rRNA at the 2'-O position of the ribose in the fully assembled 50S ribosomal subunit. The protein is Ribosomal RNA large subunit methyltransferase E of Bdellovibrio bacteriovorus (strain ATCC 15356 / DSM 50701 / NCIMB 9529 / HD100).